Here is a 233-residue protein sequence, read N- to C-terminus: Peptidyl-tRNA hydrolase (233 aa).

Tyr14 contributes to the tRNA binding site. Catalysis depends on His19, which acts as the Proton acceptor. TRNA is bound by residues Phe64, Asn66, and Asn112. The tract at residues 187-233 (VSPRRSGTGQKGKDKPPAPAKQQATATKAEPEPDTRSALQKLMERFK) is disordered.

It belongs to the PTH family. In terms of assembly, monomer.

The protein localises to the cytoplasm. It carries out the reaction an N-acyl-L-alpha-aminoacyl-tRNA + H2O = an N-acyl-L-amino acid + a tRNA + H(+). Hydrolyzes ribosome-free peptidyl-tRNAs (with 1 or more amino acids incorporated), which drop off the ribosome during protein synthesis, or as a result of ribosome stalling. Functionally, catalyzes the release of premature peptidyl moieties from peptidyl-tRNA molecules trapped in stalled 50S ribosomal subunits, and thus maintains levels of free tRNAs and 50S ribosomes. The chain is Peptidyl-tRNA hydrolase from Roseobacter denitrificans (strain ATCC 33942 / OCh 114) (Erythrobacter sp. (strain OCh 114)).